A 447-amino-acid chain; its full sequence is Serine/threonine-protein phosphatase 2A 55 kDa regulatory subunit B delta isoform (447 aa).

WD repeat units lie at residues 26-65, 91-132, 175-213, 224-264, 283-321, 338-379, and 414-447; these read AEAD…KNRP, EIEE…KRAE, AHTY…RSFN, ELTE…LCDR, EIIS…RPVE, ENDC…DITL, and DFNK…DKMN.

It belongs to the phosphatase 2A regulatory subunit B family. PP2A consists of a common heterodimeric core enzyme, composed of a 36 kDa catalytic subunit (subunit C) and a 65 kDa constant regulatory subunit (PR65 or subunit A), that associates with a variety of regulatory subunits.

The protein resides in the cytoplasm. Substrate-recognition subunit of protein phosphatase 2A (PP2A) that plays a key role in cell cycle by controlling mitosis entry and exit. The activity of PP2A complexes containing PPP2R2D (PR55-delta) fluctuate during the cell cycle: the activity is high in interphase and low in mitosis. The chain is Serine/threonine-protein phosphatase 2A 55 kDa regulatory subunit B delta isoform (ppp2r2d) from Danio rerio (Zebrafish).